Reading from the N-terminus, the 298-residue chain is Transcription factor RAX2 (298 aa).

HTH myb-type domains follow at residues 9–62 (KANV…LNYL) and 63–117 (RPNI…KKKL). 2 DNA-binding regions (H-T-H motif) span residues 38 to 62 (WIAL…LNYL) and 90 to 113 (WSVI…NTKL).

In terms of tissue distribution, ubiquitous, with higher levels in roots, flowers, and shoot tips. Found in all cells of the shoot tips.

The protein localises to the nucleus. In terms of biological role, transcription activator. Positively regulates axillary meristems (AMs) formation and development, especially during inflorescence. In Arabidopsis thaliana (Mouse-ear cress), this protein is Transcription factor RAX2 (RAX2).